The primary structure comprises 624 residues: Threonine--tRNA ligase (624 aa).

The editing domain stretch occupies residues methionine 1 to glutamate 143. A catalytic region spans residues alanine 197 to proline 499. 3 residues coordinate Zn(2+): cysteine 289, histidine 340, and histidine 467. The tract at residues leucine 598–arginine 624 is disordered.

Belongs to the class-II aminoacyl-tRNA synthetase family. In terms of assembly, homodimer. It depends on Zn(2+) as a cofactor.

The protein resides in the cytoplasm. It carries out the reaction tRNA(Thr) + L-threonine + ATP = L-threonyl-tRNA(Thr) + AMP + diphosphate + H(+). In terms of biological role, catalyzes the attachment of threonine to tRNA(Thr) in a two-step reaction: L-threonine is first activated by ATP to form Thr-AMP and then transferred to the acceptor end of tRNA(Thr). Also edits incorrectly charged L-seryl-tRNA(Thr). In Methanopyrus kandleri (strain AV19 / DSM 6324 / JCM 9639 / NBRC 100938), this protein is Threonine--tRNA ligase.